We begin with the raw amino-acid sequence, 75 residues long: uncharacterized protein (75 aa).

A Glutaredoxin domain is found at 1–75 (MIKIYSTPTC…KAEIDKLIEK (75 aa)). A disulfide bridge connects residues Cys10 and Cys13.

It belongs to the glutaredoxin family.

This is an uncharacterized protein from Clostridium pasteurianum.